The chain runs to 366 residues: MWLEKIDIQHFRNYSEASVSFSPHLNIFLGRNAQGKTNILEAIYFLALTRSHRTHLDKELIQFQQNSLKLNGIVHRHSGNLPLEINLSNKGRVTKVNYLKQAKLSDYIGHMTVVLFAPEDLQLVKGSPSLRRKFIDIDLGQIKPVYLSDLSNYNHVLKQRNAYLKSTDKVDINFLSVLDEQLADFGARVIKHRLEFIKQLEEEADGHHSILSNQIERLKISYESNIPIQNSKDIREAFLTILNQNHKRDIFKKNTGVGPHRDDLKFYINDMNASFGSQGQQRSLILSLKMAEIALIKKVTEEFPILLLDDVMSELDNHRQLKLLESIDEEVQTFMTTTSLDHLSNLPPNLKTFLVKNGTIYEKQVD.

30 to 37 (GRNAQGKT) serves as a coordination point for ATP.

It belongs to the RecF family.

Its subcellular location is the cytoplasm. Functionally, the RecF protein is involved in DNA metabolism; it is required for DNA replication and normal SOS inducibility. RecF binds preferentially to single-stranded, linear DNA. It also seems to bind ATP. The chain is DNA replication and repair protein RecF from Streptococcus thermophilus (strain ATCC BAA-250 / LMG 18311).